Here is a 326-residue protein sequence, read N- to C-terminus: Probable iron chelatin transport system permease protein jhp_0822 (326 aa).

10 helical membrane passes run 7–27 (IALA…ESLS), 64–84 (ILAL…QTIL), 91–111 (PFLL…IAVV), 113–133 (SNIA…VLAM), 142–162 (LSLV…AGAI), 164–184 (FFVI…SLSL), 187–207 (YKDC…LFLL), 241–261 (VASA…LVIP), 275–295 (LLLS…VVAK), and 301–321 (DLPV…WLLF).

This sequence belongs to the binding-protein-dependent transport system permease family. FecCD subfamily.

It localises to the cell inner membrane. Functionally, part of a binding-protein-dependent transport system for an iron chelatin; probably responsible for the translocation of the substrate across the membrane. The protein is Probable iron chelatin transport system permease protein jhp_0822 of Helicobacter pylori (strain J99 / ATCC 700824) (Campylobacter pylori J99).